The sequence spans 611 residues: Alkyldihydroxyacetonephosphate synthase (611 aa).

The region spanning V137–V317 is the FAD-binding PCMH-type domain. Residues P169–N175, D237–T243, T250–H255, and E301–I307 each bind FAD. R447 is a binding site for substrate. The Proton donor/acceptor role is filled by Y508. Residues H544–H546 form an important for enzyme activity region. The Microbody targeting signal motif lies at P609–L611.

Belongs to the FAD-binding oxidoreductase/transferase type 4 family. As to quaternary structure, homodimer. FAD serves as cofactor.

The protein resides in the peroxisome. It catalyses the reaction a long chain fatty alcohol + a 1-acylglycerone 3-phosphate = a 1-O-alkylglycerone 3-phosphate + a long-chain fatty acid + H(+). It functions in the pathway glycerolipid metabolism; ether lipid biosynthesis. Catalyzes the exchange of an acyl for a long-chain alkyl group and the formation of the ether bond in the biosynthesis of ether phospholipids. This chain is Alkyldihydroxyacetonephosphate synthase (eapA), found in Dictyostelium discoideum (Social amoeba).